The primary structure comprises 241 residues: Deoxyribose-phosphate aldolase (241 aa).

Residue Asp95 is the Proton donor/acceptor of the active site. Lys159 acts as the Schiff-base intermediate with acetaldehyde in catalysis. Catalysis depends on Lys188, which acts as the Proton donor/acceptor.

This sequence belongs to the DeoC/FbaB aldolase family. DeoC type 1 subfamily.

It localises to the cytoplasm. It catalyses the reaction 2-deoxy-D-ribose 5-phosphate = D-glyceraldehyde 3-phosphate + acetaldehyde. It functions in the pathway carbohydrate degradation; 2-deoxy-D-ribose 1-phosphate degradation; D-glyceraldehyde 3-phosphate and acetaldehyde from 2-deoxy-alpha-D-ribose 1-phosphate: step 2/2. In terms of biological role, catalyzes a reversible aldol reaction between acetaldehyde and D-glyceraldehyde 3-phosphate to generate 2-deoxy-D-ribose 5-phosphate. The sequence is that of Deoxyribose-phosphate aldolase from Rhodopirellula baltica (strain DSM 10527 / NCIMB 13988 / SH1).